Here is a 306-residue protein sequence, read N- to C-terminus: Glutaminase (306 aa).

Substrate is bound by residues S64, N115, E159, N166, Y190, Y242, and V260.

The protein belongs to the glutaminase family. As to quaternary structure, homotetramer.

It carries out the reaction L-glutamine + H2O = L-glutamate + NH4(+). In Aliivibrio fischeri (strain ATCC 700601 / ES114) (Vibrio fischeri), this protein is Glutaminase.